The primary structure comprises 360 residues: Protein YIM1-1 (360 aa).

Belongs to the YIM1 family.

The protein resides in the lipid droplet. It localises to the mitochondrion. The sequence is that of Protein YIM1-1 (YIM1-1) from Lachancea thermotolerans (strain ATCC 56472 / CBS 6340 / NRRL Y-8284) (Yeast).